The primary structure comprises 416 residues: MGNFKLKCLKCGREYGQEYRLTCENDNAFLRAEYSEKRLVLRNQPGIGRFHSWLPVQEELTTDAGPITYKSEAFARELGLSNLYIGFSGYWPERGAFIKTCSFKELEAHPTMQLLKETGGKAVVLASAGNTGRAFAHVSALTGTDVYIVVPESGASKLWLPEEPTESVHLISMSPGNDYTDAINLAGRIAKLPGMVSEGGARNIARRDGMGTVMLDAAVTIGKMPDHYFQAVGSGTGGISVWEAAMRLRTDGRFGQKLPKLQLAQNLPFVPMYNAWQEKRREIIPELDMKDAKKQVEETYATVLTNRTPPYGVMGGLYDALTDTDGIMYAITREEALEAKALFESLEGIDILPPSAVATASLLKAVEEGNVSKDETILLNLAGGGYKRLKEDYTLYQIEPVATAKNPDISLDELKI.

Position 104 is an N6-(pyridoxal phosphate)lysine (K104). N130 lines the pyridoxal 5'-phosphate pocket.

It belongs to the threonine synthase family. Cysteate synthase subfamily. Homotrimer. It depends on pyridoxal 5'-phosphate as a cofactor.

It carries out the reaction O-phospho-L-serine + sulfite + H(+) = L-cysteate + phosphate. It functions in the pathway cofactor biosynthesis; coenzyme M biosynthesis. In terms of biological role, specifically catalyzes the beta-elimination of phosphate from L-phosphoserine and the beta-addition of sulfite to the dehydroalanine intermediate to produce L-cysteate. This Methanosarcina barkeri (strain Fusaro / DSM 804) protein is Cysteate synthase.